Here is a 107-residue protein sequence, read N- to C-terminus: Putative ATP synthase subunit f, mitochondrial (107 aa).

The protein belongs to the ATPase F chain family. In terms of assembly, F-type ATPases have 2 components, CF(1) - the catalytic core - and CF(0) - the membrane proton channel. CF(0) seems to have nine subunits: a, b, c, d, e, f, g, F6 and 8 (or A6L).

It localises to the mitochondrion membrane. Mitochondrial membrane ATP synthase (F(1)F(0) ATP synthase or Complex V) produces ATP from ADP in the presence of a proton gradient across the membrane which is generated by electron transport complexes of the respiratory chain. F-type ATPases consist of two structural domains, F(1) - containing the extramembraneous catalytic core and F(0) - containing the membrane proton channel, linked together by a central stalk and a peripheral stalk. During catalysis, ATP synthesis in the catalytic domain of F(1) is coupled via a rotary mechanism of the central stalk subunits to proton translocation. Part of the complex F(0) domain. Minor subunit located with subunit a in the membrane. The chain is Putative ATP synthase subunit f, mitochondrial from Drosophila melanogaster (Fruit fly).